Reading from the N-terminus, the 481-residue chain is Aspartyl/glutamyl-tRNA(Asn/Gln) amidotransferase subunit B (481 aa).

It belongs to the GatB/GatE family. GatB subfamily. As to quaternary structure, heterotrimer of A, B and C subunits.

The enzyme catalyses L-glutamyl-tRNA(Gln) + L-glutamine + ATP + H2O = L-glutaminyl-tRNA(Gln) + L-glutamate + ADP + phosphate + H(+). It carries out the reaction L-aspartyl-tRNA(Asn) + L-glutamine + ATP + H2O = L-asparaginyl-tRNA(Asn) + L-glutamate + ADP + phosphate + 2 H(+). Allows the formation of correctly charged Asn-tRNA(Asn) or Gln-tRNA(Gln) through the transamidation of misacylated Asp-tRNA(Asn) or Glu-tRNA(Gln) in organisms which lack either or both of asparaginyl-tRNA or glutaminyl-tRNA synthetases. The reaction takes place in the presence of glutamine and ATP through an activated phospho-Asp-tRNA(Asn) or phospho-Glu-tRNA(Gln). The chain is Aspartyl/glutamyl-tRNA(Asn/Gln) amidotransferase subunit B from Cellvibrio japonicus (strain Ueda107) (Pseudomonas fluorescens subsp. cellulosa).